We begin with the raw amino-acid sequence, 436 residues long: GTPase Der (436 aa).

EngA-type G domains are found at residues 4–167 (PTVA…PVEE) and 175–351 (IRFS…ESQN). GTP contacts are provided by residues 10–17 (GRPNVGKS), 57–61 (DTGGI), 119–122 (NKVD), 181–188 (GRPNVGKS), 229–233 (DTAGM), and 294–297 (NKWD). One can recognise a KH-like domain in the interval 352-436 (KRIPSAVLND…PIHLIARKRK (85 aa)).

It belongs to the TRAFAC class TrmE-Era-EngA-EngB-Septin-like GTPase superfamily. EngA (Der) GTPase family. Associates with the 50S ribosomal subunit.

In terms of biological role, GTPase that plays an essential role in the late steps of ribosome biogenesis. The protein is GTPase Der of Streptococcus pyogenes serotype M1.